The sequence spans 314 residues: tRNA pseudouridine synthase B (314 aa).

His-43 is a binding site for substrate. Catalysis depends on Asp-48, which acts as the Nucleophile. 3 residues coordinate substrate: Tyr-76, Tyr-179, and Leu-200.

Belongs to the pseudouridine synthase TruB family. Type 1 subfamily.

The catalysed reaction is uridine(55) in tRNA = pseudouridine(55) in tRNA. Functionally, responsible for synthesis of pseudouridine from uracil-55 in the psi GC loop of transfer RNAs. The polypeptide is tRNA pseudouridine synthase B (Escherichia coli O157:H7).